We begin with the raw amino-acid sequence, 161 residues long: Allophycocyanin beta chain (161 aa).

At Asn-71 the chain carries N4-methylasparagine. Cys-81 contributes to the (2R,3E)-phycocyanobilin binding site.

The protein belongs to the phycobiliprotein family. As to quaternary structure, heterodimer of an alpha and a beta chain. Post-translationally, contains one covalently linked phycocyanobilin chromophore.

The protein localises to the plastid. Its subcellular location is the chloroplast thylakoid membrane. In terms of biological role, light-harvesting photosynthetic bile pigment-protein from the phycobiliprotein complex. Allophycocyanin has a maximum absorption at approximately 650 nanometers. This is Allophycocyanin beta chain (apcB) from Cyanidium caldarium (Red alga).